Consider the following 137-residue polypeptide: Nucleoside diphosphate kinase (137 aa).

Residues Lys-11, Phe-59, Arg-87, Thr-93, Arg-104, and Asn-114 each coordinate ATP. His-117 acts as the Pros-phosphohistidine intermediate in catalysis.

This sequence belongs to the NDK family. In terms of assembly, homotetramer. The cofactor is Mg(2+).

The protein resides in the cytoplasm. It catalyses the reaction a 2'-deoxyribonucleoside 5'-diphosphate + ATP = a 2'-deoxyribonucleoside 5'-triphosphate + ADP. It carries out the reaction a ribonucleoside 5'-diphosphate + ATP = a ribonucleoside 5'-triphosphate + ADP. In terms of biological role, major role in the synthesis of nucleoside triphosphates other than ATP. The ATP gamma phosphate is transferred to the NDP beta phosphate via a ping-pong mechanism, using a phosphorylated active-site intermediate. This is Nucleoside diphosphate kinase from Frankia casuarinae (strain DSM 45818 / CECT 9043 / HFP020203 / CcI3).